The following is a 977-amino-acid chain: Short transient receptor potential channel 4 (977 aa).

The Cytoplasmic segment spans residues 1–324 (MAQFYYKRNV…YDEFPGWRRR (324 aa)). ANK repeat units lie at residues 29-60 (LSPSEKAYLNAVEKGDYASVKKSLEEAEIYFK), 71-93 (RTALLIAIENENLELIELLLSFN), 96-118 (VGDALLHAIRKEVVGAVELLLNH), and 141-165 (PDITPIILAAHTNNYEIIKLLVQKG). Residues His-172, Cys-176, Cys-178, and Cys-181 each coordinate Zn(2+). Positions 223 to 260 (LSWELQELSKVENEFKSEYEELSRQCKQFAKDLLDQTR) form a coiled coil. Positions 325 to 359 (HWAVKMVTCFIIGLLFPVFSVCYLIAPKSPLGLFI) form an intramembrane region, discontinuously helical. Over 360 to 362 (RKP) the chain is Cytoplasmic. A helical transmembrane segment spans residues 363 to 383 (FIKFICHTASYLTFLFLLLLA). The Extracellular segment spans residues 384 to 403 (SQHIDRSDLNRQGPPPTIVE). The helical transmembrane segment at 404-418 (WMILPWVLGFIWGEI) threads the bilayer. Ca(2+) contacts are provided by Glu-417, Gln-420, Asn-435, and Asp-438. The Cytoplasmic portion of the chain corresponds to 419–432 (KQMWDGGLQDYIHD). A helical membrane pass occupies residues 433-453 (WWNLMDFVMNSLYLATISLKI). Residues 454-475 (VAFVKYSALNPRESWDMWHPTL) are Extracellular-facing. Residues 476–498 (VAEALFAIANIFSSLRLISLFTA) traverse the membrane as a helical segment. The Cytoplasmic segment spans residues 499-511 (NSHLGPLQISLGR). A helical membrane pass occupies residues 512 to 534 (MLLDILKFLFIYCLVLLAFANGL). The Extracellular segment spans residues 535 to 599 (NQLYFYYEET…HEFTDFVGAT (65 aa)). The cysteines at positions 549 and 554 are disulfide-linked. A helical membrane pass occupies residues 600–620 (MFGTYNVISLVVLLNMLIAMM). The tract at residues 615 to 977 (MLIAMMNNSY…AHEDYVTTRL (363 aa)) is interaction with ITPR1, ITPR2 and ITPR3. The Cytoplasmic segment spans residues 621–977 (NNSYQLIADH…AHEDYVTTRL (357 aa)). Positions 767 to 790 (AASSASSADSDEKSHSEGNGKDKR) are disordered. A compositionally biased stretch (basic and acidic residues) spans 776–787 (SDEKSHSEGNGK). Tyr-959 and Tyr-972 each carry phosphotyrosine; by FYN. Positions 975–977 (TRL) are PDZ-binding domain.

It belongs to the transient receptor (TC 1.A.4) family. STrpC subfamily. TRPC4 sub-subfamily. In terms of assembly, homotetramer. Heterotetramer with TRPC1 and/or TRPC5. Forms a heteromeric ion channel with TRPC1, with a 1:3 TRPC1:TRPC4 stoichiometry. Interacts with TRPC4AP. Isoform alpha but not isoform beta interacts with ITPR1, ITPR2 and ITPR3. Interacts with NHERF1. Interacts with MX1 and RNF24. Interacts (via CIRB domain) with SESTD1 (via the spectrin 1 repeat) and SPTBN5 (via C-terminus). Interacts with CDH5 and CTNNB1. Interacts (via protein 4.1-binding domain) with EPB41L2. Interacts with PLSCR1.

The protein resides in the cell membrane. The catalysed reaction is Ca(2+)(in) = Ca(2+)(out). It catalyses the reaction Na(+)(in) = Na(+)(out). The enzyme catalyses Li(+)(in) = Li(+)(out). It carries out the reaction Cs(+)(in) = Cs(+)(out). May be operated by a phosphatidylinositol second messenger system activated by receptor tyrosine kinases or G-protein coupled receptors. May be activated by intracellular calcium store depletion. Its function is as follows. Forms a receptor-activated non-selective calcium permeant cation channel. Acts as a cell-cell contact-dependent endothelial calcium entry channel. Forms a homomeric ion channel or a heteromeric ion channel with TRPC1; the heteromeric ion channel has reduced calcium permeability compared to the homomeric channel. Also permeable to monovalent ions including sodium, lithium and cesium ions. Functionally, forms a non-selective a receptor-activated calcium permeant cation channel. Probably is operated by a phosphatidylinositol second messenger system activated by receptor tyrosine kinases or G-protein coupled receptors. In Rattus norvegicus (Rat), this protein is Short transient receptor potential channel 4 (Trpc4).